Reading from the N-terminus, the 172-residue chain is Adenine phosphoribosyltransferase (172 aa).

It belongs to the purine/pyrimidine phosphoribosyltransferase family. Homodimer.

The protein resides in the cytoplasm. It carries out the reaction AMP + diphosphate = 5-phospho-alpha-D-ribose 1-diphosphate + adenine. Its pathway is purine metabolism; AMP biosynthesis via salvage pathway; AMP from adenine: step 1/1. Its function is as follows. Catalyzes a salvage reaction resulting in the formation of AMP, that is energically less costly than de novo synthesis. The chain is Adenine phosphoribosyltransferase from Levilactobacillus brevis (strain ATCC 367 / BCRC 12310 / CIP 105137 / JCM 1170 / LMG 11437 / NCIMB 947 / NCTC 947) (Lactobacillus brevis).